Here is a 158-residue protein sequence, read N- to C-terminus: Cyclic pyranopterin monophosphate synthase (158 aa).

Substrate is bound by residues Leu-75–His-77 and Met-113–Glu-114. The active site involves Asp-128.

Belongs to the MoaC family. In terms of assembly, homohexamer; trimer of dimers.

It carries out the reaction (8S)-3',8-cyclo-7,8-dihydroguanosine 5'-triphosphate = cyclic pyranopterin phosphate + diphosphate. Its pathway is cofactor biosynthesis; molybdopterin biosynthesis. Catalyzes the conversion of (8S)-3',8-cyclo-7,8-dihydroguanosine 5'-triphosphate to cyclic pyranopterin monophosphate (cPMP). This is Cyclic pyranopterin monophosphate synthase from Paraburkholderia xenovorans (strain LB400).